The chain runs to 464 residues: Glutamate--tRNA ligase (464 aa).

Positions Pro-9 to Gly-19 match the 'HIGH' region motif. The 'KMSKS' region signature appears at Lys-242–Arg-246. ATP is bound at residue Lys-245.

The protein belongs to the class-I aminoacyl-tRNA synthetase family. Glutamate--tRNA ligase type 1 subfamily. Monomer.

It is found in the cytoplasm. The enzyme catalyses tRNA(Glu) + L-glutamate + ATP = L-glutamyl-tRNA(Glu) + AMP + diphosphate. Its function is as follows. Catalyzes the attachment of glutamate to tRNA(Glu) in a two-step reaction: glutamate is first activated by ATP to form Glu-AMP and then transferred to the acceptor end of tRNA(Glu). The chain is Glutamate--tRNA ligase from Neisseria meningitidis serogroup C (strain 053442).